The primary structure comprises 465 residues: Iron-sulfur cluster assembly SufBD family protein SERP0500 (465 aa).

This sequence belongs to the iron-sulfur cluster assembly SufBD family.

The chain is Iron-sulfur cluster assembly SufBD family protein SERP0500 from Staphylococcus epidermidis (strain ATCC 35984 / DSM 28319 / BCRC 17069 / CCUG 31568 / BM 3577 / RP62A).